The sequence spans 415 residues: G-protein coupled receptor daf-38 (415 aa).

Low complexity predominate over residues 1–19 (MLLPSNLTTSTLMTSSSES). Positions 1–25 (MLLPSNLTTSTLMTSSSESYDADNP) are disordered. At 1-35 (MLLPSNLTTSTLMTSSSESYDADNPGLPPEPILSD) the chain is on the extracellular side. Residues 36-56 (YVEMFTLVLNFIVGAPLNLAA) form a helical membrane-spanning segment. At 57–75 (YTQLSERPTSTRLDLLKRS) the chain is on the cytoplasmic side. The chain crosses the membrane as a helical span at residues 76–96 (LNYSDLLVLFIYVPSRACWLL). Over 97–108 (TYDWRGGDALCK) the chain is Extracellular. An intrachain disulfide couples C107 to C187. A helical transmembrane segment spans residues 109–129 (IVKMFHTFAFQSSSNVIVCIA). Topologically, residues 130–152 (VDRLLSVLSPSHHSPNKALKRTK) are cytoplasmic. A helical membrane pass occupies residues 153-173 (MMLIVAWIVALVISCPQLFIW). The Extracellular segment spans residues 174 to 222 (KAYLALPEYNWSQCLQIWEIARMEKFNKPQVVPEFDAEFWYSILHISLV). The chain crosses the membrane as a helical span at residues 223–243 (FWIPCIIIMLSYIIVISWVWI). The Cytoplasmic segment spans residues 244–345 (NSRPSIRHTS…NLNRSRALRV (102 aa)). A helical transmembrane segment spans residues 346 to 366 (SLLLVVAYIICWLPYNLISLI). The Extracellular portion of the chain corresponds to 367-382 (QFLDRDFFSSYLKHVH). Residues 383–403 (FCQQLIIFNSVVNPWLYGFFG) traverse the membrane as a helical segment. Residues 404 to 415 (PRRPSTTGAGRH) lie on the Cytoplasmic side of the membrane.

The protein belongs to the G-protein coupled receptor 1 family. In terms of assembly, heterodimer; with daf-37. In terms of tissue distribution, expressed in the ASI and ASK chemosensory neurons and in the IL-2 interneurons, but weakly expressed in other head neurons in hermaphrodites.

It localises to the cell membrane. Functionally, G-protein coupled receptor (GPCR) that forms a heterodimer with daf-37 to control dauer formation and behavior. Required for the response to dauer inducing pheromones such as the ascarosides ascr#2, ascr#3 and ascr#5. This chain is G-protein coupled receptor daf-38, found in Caenorhabditis elegans.